Consider the following 361-residue polypeptide: Caspase activity and apoptosis inhibitor 1 (361 aa).

Basic residues predominate over residues 1–14 (MTGKKSSREKRRKR). Disordered stretches follow at residues 1–28 (MTGK…APDI) and 67–100 (GGSG…GSLQ). Residues 19–28 (AAAALAAPDI) show a composition bias toward low complexity. S89 carries the phosphoserine modification. Phosphothreonine is present on T90. K104 participates in a covalent cross-link: Glycyl lysine isopeptide (Lys-Gly) (interchain with G-Cter in SUMO2). S120 and S203 each carry phosphoserine. Disordered stretches follow at residues 198-218 (DNGM…MGSD) and 230-331 (ASSV…DVQP). Over residues 199 to 210 (NGMDSDMEEEAD) the composition is skewed to acidic residues. Over residues 234-251 (RENKQPEGLELKQGKGED) the composition is skewed to basic and acidic residues. The segment covering 272–281 (EEAAAPEAPE) has biased composition (low complexity). Residues 281–311 (ENTVQSEAGQIDDLEKDIEKSVNEILGLAES) are a coiled coil. S312 carries the post-translational modification Phosphoserine.

Ubiquitous.

In terms of biological role, anti-apoptotic protein that modulates a caspase-10 dependent mitochondrial caspase-3/9 feedback amplification loop. The polypeptide is Caspase activity and apoptosis inhibitor 1 (CAAP1) (Homo sapiens (Human)).